Here is a 319-residue protein sequence, read N- to C-terminus: Vomeronasal type-1 receptor 96 (319 aa).

The Extracellular segment spans residues 1 to 19 (MNKVNILPSDTNIKITLFS). The chain crosses the membrane as a helical span at residues 20-40 (EVSVGISANSVLFFAHLCMFF). The Cytoplasmic segment spans residues 41–49 (EENRSKPID). Residues 50-70 (LCIAFLSLTQLMLLVTMGLIA) form a helical membrane-spanning segment. The Extracellular segment spans residues 71–93 (ADMFMSQGIWDSTTCRSIIYFHR). Cys-85 and Cys-172 are oxidised to a cystine. A helical transmembrane segment spans residues 94–114 (LLRGFNLCAACLLHILWTFTL). At 115–134 (SPRSSCLTKFKHKSPHHISC) the chain is on the cytoplasmic side. The chain crosses the membrane as a helical span at residues 135-155 (AFFSLCVLYMLFSSHLFVLII). At 156–193 (ATSNLTSDHFMYVTQSCSILPMSYSRTTMFSLVMVTRE) the chain is on the extracellular side. A glycan (N-linked (GlcNAc...) asparagine) is linked at Asn-159. The helical transmembrane segment at 194–214 (AFLISLMALFSGYMVTLLWRH) threads the bilayer. Over 215–238 (KKQVQHLHSTSLSSKSSPQQRATR) the chain is Cytoplasmic. Residues 239 to 259 (TILLLMSFFVVLYILDIVIFQ) traverse the membrane as a helical segment. The Extracellular portion of the chain corresponds to 260-269 (SRTKFKDGSM). Residues 270–290 (FYSLHIIVSHSYATISPFVFI) form a helical membrane-spanning segment. The Cytoplasmic portion of the chain corresponds to 291–319 (FSDKRIIKFLGSMSGRIINICLFSDGYGP).

It belongs to the G-protein coupled receptor 1 family.

The protein resides in the cell membrane. Its function is as follows. Putative pheromone receptor implicated in the regulation of social as well as reproductive behavior. This is Vomeronasal type-1 receptor 96 (Vom1r96) from Rattus norvegicus (Rat).